The primary structure comprises 136 residues: Nucleoside diphosphate kinase (136 aa).

Residues lysine 9, phenylalanine 57, arginine 85, threonine 91, arginine 102, and asparagine 112 each contribute to the ATP site. Catalysis depends on histidine 115, which acts as the Pros-phosphohistidine intermediate.

The protein belongs to the NDK family. Homotetramer. The cofactor is Mg(2+).

It localises to the cytoplasm. It carries out the reaction a 2'-deoxyribonucleoside 5'-diphosphate + ATP = a 2'-deoxyribonucleoside 5'-triphosphate + ADP. It catalyses the reaction a ribonucleoside 5'-diphosphate + ATP = a ribonucleoside 5'-triphosphate + ADP. Its function is as follows. Major role in the synthesis of nucleoside triphosphates other than ATP. The ATP gamma phosphate is transferred to the NDP beta phosphate via a ping-pong mechanism, using a phosphorylated active-site intermediate. This chain is Nucleoside diphosphate kinase, found in Acetivibrio thermocellus (strain ATCC 27405 / DSM 1237 / JCM 9322 / NBRC 103400 / NCIMB 10682 / NRRL B-4536 / VPI 7372) (Clostridium thermocellum).